The chain runs to 783 residues: BMP/retinoic acid-inducible neural-specific protein 2 (783 aa).

The first 33 residues, 1–33 (MRWPCSSRFRGLWPEAAPWAVLLALGVPGWVLA), serve as a signal peptide directing secretion. The MACPF domain occupies 85-281 (RYRIYREFAR…FVAAALSYIT (197 aa)). 6 N-linked (GlcNAc...) asparagine glycosylation sites follow: asparagine 185, asparagine 354, asparagine 473, asparagine 579, asparagine 626, and asparagine 658.

It belongs to the BRINP family. Expressed in olfactory bulb, cerebellum and neuronal layers in hippocampus.

The protein localises to the secreted. Inhibits neuronal cell proliferation by negative regulation of the cell cycle transition. The sequence is that of BMP/retinoic acid-inducible neural-specific protein 2 (Brinp2) from Rattus norvegicus (Rat).